Consider the following 283-residue polypeptide: uncharacterized protein (283 aa).

The interval 1–21 (MSAYTHPMERELSGLSSRGNS) is disordered. Residues 41–61 (SIFIASLVTFGVLMITLLIAL) form a helical membrane-spanning segment.

Belongs to the APS1/VSP family.

The protein resides in the membrane. This is an uncharacterized protein from Arabidopsis thaliana (Mouse-ear cress).